Consider the following 203-residue polypeptide: Transcriptional regulator GfcR (203 aa).

Belongs to the purine/pyrimidine phosphoribosyltransferase family. GfcR subfamily.

This is Transcriptional regulator GfcR from Methanothrix thermoacetophila (strain DSM 6194 / JCM 14653 / NBRC 101360 / PT) (Methanosaeta thermophila).